Here is a 143-residue protein sequence, read N- to C-terminus: Transcription antitermination protein NusB (143 aa).

This sequence belongs to the NusB family.

In terms of biological role, involved in transcription antitermination. Required for transcription of ribosomal RNA (rRNA) genes. Binds specifically to the boxA antiterminator sequence of the ribosomal RNA (rrn) operons. The polypeptide is Transcription antitermination protein NusB (Clostridium botulinum (strain ATCC 19397 / Type A)).